We begin with the raw amino-acid sequence, 200 residues long: Protein OPI10 homolog (200 aa).

The protein belongs to the OPI10 family.

Its subcellular location is the cytoplasm. The protein localises to the nucleus envelope. In Schizosaccharomyces pombe (strain 972 / ATCC 24843) (Fission yeast), this protein is Protein OPI10 homolog.